A 332-amino-acid polypeptide reads, in one-letter code: tRNA N6-adenosine threonylcarbamoyltransferase (332 aa).

The Fe cation site is built by H108 and H112. Residues 129 to 133, D161, E178, and S258 contribute to the substrate site; that span reads LISGG. D286 is a Fe cation binding site.

This sequence belongs to the KAE1 / TsaD family. Fe(2+) is required as a cofactor.

The protein resides in the cytoplasm. The enzyme catalyses L-threonylcarbamoyladenylate + adenosine(37) in tRNA = N(6)-L-threonylcarbamoyladenosine(37) in tRNA + AMP + H(+). Functionally, required for the formation of a threonylcarbamoyl group on adenosine at position 37 (t(6)A37) in tRNAs that read codons beginning with adenine. Is probably involved in the transfer of the threonylcarbamoyl moiety of threonylcarbamoyl-AMP (TC-AMP) to the N6 group of A37. This is tRNA N6-adenosine threonylcarbamoyltransferase from Pyrobaculum arsenaticum (strain DSM 13514 / JCM 11321 / PZ6).